The following is a 199-amino-acid chain: Putative acetyltransferase SAV2555 (199 aa).

Belongs to the transferase hexapeptide repeat family.

This Staphylococcus aureus (strain Mu50 / ATCC 700699) protein is Putative acetyltransferase SAV2555.